A 306-amino-acid chain; its full sequence is UDP-3-O-acyl-N-acetylglucosamine deacetylase (306 aa).

Zn(2+)-binding residues include H79, H238, and D242. H265 functions as the Proton donor in the catalytic mechanism.

This sequence belongs to the LpxC family. The cofactor is Zn(2+).

It carries out the reaction a UDP-3-O-[(3R)-3-hydroxyacyl]-N-acetyl-alpha-D-glucosamine + H2O = a UDP-3-O-[(3R)-3-hydroxyacyl]-alpha-D-glucosamine + acetate. Its pathway is glycolipid biosynthesis; lipid IV(A) biosynthesis; lipid IV(A) from (3R)-3-hydroxytetradecanoyl-[acyl-carrier-protein] and UDP-N-acetyl-alpha-D-glucosamine: step 2/6. Its function is as follows. Catalyzes the hydrolysis of UDP-3-O-myristoyl-N-acetylglucosamine to form UDP-3-O-myristoylglucosamine and acetate, the committed step in lipid A biosynthesis. The chain is UDP-3-O-acyl-N-acetylglucosamine deacetylase from Shewanella pealeana (strain ATCC 700345 / ANG-SQ1).